A 431-amino-acid chain; its full sequence is Enolase (431 aa).

Glutamine 163 is a binding site for (2R)-2-phosphoglycerate. Glutamate 205 functions as the Proton donor in the catalytic mechanism. Residues aspartate 242, glutamate 283, and aspartate 310 each coordinate Mg(2+). Lysine 335, arginine 364, serine 365, and lysine 386 together coordinate (2R)-2-phosphoglycerate. Lysine 335 serves as the catalytic Proton acceptor.

This sequence belongs to the enolase family. Mg(2+) is required as a cofactor.

The protein resides in the cytoplasm. Its subcellular location is the secreted. It is found in the cell surface. The enzyme catalyses (2R)-2-phosphoglycerate = phosphoenolpyruvate + H2O. Its pathway is carbohydrate degradation; glycolysis; pyruvate from D-glyceraldehyde 3-phosphate: step 4/5. In terms of biological role, catalyzes the reversible conversion of 2-phosphoglycerate (2-PG) into phosphoenolpyruvate (PEP). It is essential for the degradation of carbohydrates via glycolysis. This is Enolase from Kineococcus radiotolerans (strain ATCC BAA-149 / DSM 14245 / SRS30216).